The following is a 123-amino-acid chain: Small ribosomal subunit protein uS12 (123 aa).

Positions 1-47 (MPTINQLVRKGRKKAEKKQSTPALKGGPQKRGVCTRVYTSTPKKPNS) are disordered. Aspartate 89 carries the post-translational modification 3-methylthioaspartic acid.

It belongs to the universal ribosomal protein uS12 family. As to quaternary structure, part of the 30S ribosomal subunit. Contacts proteins S8 and S17. May interact with IF1 in the 30S initiation complex.

Functionally, with S4 and S5 plays an important role in translational accuracy. Its function is as follows. Interacts with and stabilizes bases of the 16S rRNA that are involved in tRNA selection in the A site and with the mRNA backbone. Located at the interface of the 30S and 50S subunits, it traverses the body of the 30S subunit contacting proteins on the other side and probably holding the rRNA structure together. The combined cluster of proteins S8, S12 and S17 appears to hold together the shoulder and platform of the 30S subunit. The sequence is that of Small ribosomal subunit protein uS12 from Desulforapulum autotrophicum (strain ATCC 43914 / DSM 3382 / VKM B-1955 / HRM2) (Desulfobacterium autotrophicum).